The following is a 586-amino-acid chain: Phosphomethylpyrimidine synthase (586 aa).

Residues 1-58 form a disordered region; the sequence is MKQSVSAEQIELKSSLPGSKKVYVDGPREGMKVPMREIEQSDTNGVPNPPIRVYDTSG. Basic and acidic residues predominate over residues 22-39; that stretch reads VYVDGPREGMKVPMREIE. Substrate-binding positions include Asn193, Met222, Tyr251, His287, 307 to 309, 348 to 351, and Glu387; these read SRG and DGLR. His391 is a Zn(2+) binding site. Tyr414 is a substrate binding site. His455 lines the Zn(2+) pocket. The [4Fe-4S] cluster site is built by Cys535, Cys538, and Cys543.

The protein belongs to the ThiC family. The cofactor is [4Fe-4S] cluster.

It carries out the reaction 5-amino-1-(5-phospho-beta-D-ribosyl)imidazole + S-adenosyl-L-methionine = 4-amino-2-methyl-5-(phosphooxymethyl)pyrimidine + CO + 5'-deoxyadenosine + formate + L-methionine + 3 H(+). It functions in the pathway cofactor biosynthesis; thiamine diphosphate biosynthesis. In terms of biological role, catalyzes the synthesis of the hydroxymethylpyrimidine phosphate (HMP-P) moiety of thiamine from aminoimidazole ribotide (AIR) in a radical S-adenosyl-L-methionine (SAM)-dependent reaction. This chain is Phosphomethylpyrimidine synthase, found in Bacillus thuringiensis (strain Al Hakam).